A 118-amino-acid chain; its full sequence is Small ribosomal subunit protein uS13 (118 aa).

A disordered region spans residues 94 to 118; the sequence is SLPLRGQRTKTNARTRKGPRKPIKK.

The protein belongs to the universal ribosomal protein uS13 family. Part of the 30S ribosomal subunit. Forms a loose heterodimer with protein S19. Forms two bridges to the 50S subunit in the 70S ribosome.

In terms of biological role, located at the top of the head of the 30S subunit, it contacts several helices of the 16S rRNA. In the 70S ribosome it contacts the 23S rRNA (bridge B1a) and protein L5 of the 50S subunit (bridge B1b), connecting the 2 subunits; these bridges are implicated in subunit movement. Contacts the tRNAs in the A and P-sites. The chain is Small ribosomal subunit protein uS13 from Shewanella oneidensis (strain ATCC 700550 / JCM 31522 / CIP 106686 / LMG 19005 / NCIMB 14063 / MR-1).